The primary structure comprises 416 residues: NADH-quinone oxidoreductase subunit D (416 aa).

It belongs to the complex I 49 kDa subunit family. NDH-1 is composed of 14 different subunits. Subunits NuoB, C, D, E, F, and G constitute the peripheral sector of the complex.

The protein resides in the cell inner membrane. The catalysed reaction is a quinone + NADH + 5 H(+)(in) = a quinol + NAD(+) + 4 H(+)(out). Its function is as follows. NDH-1 shuttles electrons from NADH, via FMN and iron-sulfur (Fe-S) centers, to quinones in the respiratory chain. The immediate electron acceptor for the enzyme in this species is believed to be ubiquinone. Couples the redox reaction to proton translocation (for every two electrons transferred, four hydrogen ions are translocated across the cytoplasmic membrane), and thus conserves the redox energy in a proton gradient. This is NADH-quinone oxidoreductase subunit D from Gluconacetobacter diazotrophicus (strain ATCC 49037 / DSM 5601 / CCUG 37298 / CIP 103539 / LMG 7603 / PAl5).